Consider the following 382-residue polypeptide: Galactokinase (382 aa).

34-37 (EHTD) contacts substrate. 124–130 (GAGLSSS) is a binding site for ATP. Mg(2+) contacts are provided by Ser130 and Glu162. The active-site Proton acceptor is Asp174. Tyr223 provides a ligand contact to substrate.

Belongs to the GHMP kinase family. GalK subfamily.

Its subcellular location is the cytoplasm. The enzyme catalyses alpha-D-galactose + ATP = alpha-D-galactose 1-phosphate + ADP + H(+). It functions in the pathway carbohydrate metabolism; galactose metabolism. Catalyzes the transfer of the gamma-phosphate of ATP to D-galactose to form alpha-D-galactose-1-phosphate (Gal-1-P). In Salmonella choleraesuis (strain SC-B67), this protein is Galactokinase.